The chain runs to 265 residues: Hydroxyethylthiazole kinase (265 aa).

Met50 is a substrate binding site. The ATP site is built by Arg125 and Thr171. Substrate is bound at residue Gly198.

It belongs to the Thz kinase family. Mg(2+) serves as cofactor.

The enzyme catalyses 5-(2-hydroxyethyl)-4-methylthiazole + ATP = 4-methyl-5-(2-phosphooxyethyl)-thiazole + ADP + H(+). Its pathway is cofactor biosynthesis; thiamine diphosphate biosynthesis; 4-methyl-5-(2-phosphoethyl)-thiazole from 5-(2-hydroxyethyl)-4-methylthiazole: step 1/1. In terms of biological role, catalyzes the phosphorylation of the hydroxyl group of 4-methyl-5-beta-hydroxyethylthiazole (THZ). The sequence is that of Hydroxyethylthiazole kinase from Salmonella newport (strain SL254).